The primary structure comprises 113 residues: MPRGMGWGRGRGRRRKMRMIGFIPQVRHFYPAQPPVFQPKPPIFMTYEEFEALRLVDYEGLTQEEAGQRMGVSRGTVWRALTSARKKVAQMLVEGRELIILPGGNEVPRGADE.

This sequence belongs to the UPF0251 family.

This Thermococcus kodakarensis (strain ATCC BAA-918 / JCM 12380 / KOD1) (Pyrococcus kodakaraensis (strain KOD1)) protein is UPF0251 protein TK0562.